A 154-amino-acid chain; its full sequence is MATILVLHGPNLNLLGTREPEIYGRETLADIDQKLMTLCLERGHHLHFLQSNAEYELIDRIHDARREGVNFIVINPAAFTHTSVALRDALAGVGIPFVECHLSNVFSREAFRHHSYFSDIAVGVVCGFGSQSYELALQAAFNYLDKNKPEQKHS.

Residue Tyr23 is the Proton acceptor of the active site. Substrate-binding residues include Asn75, His81, and Asp88. His101 functions as the Proton donor in the catalytic mechanism. Residues 102–103 (LS) and Arg112 contribute to the substrate site.

This sequence belongs to the type-II 3-dehydroquinase family. In terms of assembly, homododecamer.

The catalysed reaction is 3-dehydroquinate = 3-dehydroshikimate + H2O. It functions in the pathway metabolic intermediate biosynthesis; chorismate biosynthesis; chorismate from D-erythrose 4-phosphate and phosphoenolpyruvate: step 3/7. Its function is as follows. Catalyzes a trans-dehydration via an enolate intermediate. This Teredinibacter turnerae (strain ATCC 39867 / T7901) protein is 3-dehydroquinate dehydratase.